A 548-amino-acid chain; its full sequence is Solute carrier family 22 member 7 (548 aa).

12 consecutive transmembrane segments (helical) span residues 21-41, 146-166, 180-200, 204-224, 234-254, 259-279, 346-366, 376-397, 404-423, 432-452, 466-486, and 493-513; these read VALL…PIFL, AAST…GYLS, VSTL…MFAI, LTGS…LEWL, VLSS…GYLI, WLLL…WWVP, ISLC…GLSL, YQTQ…YLSV, LTQA…RLLV, TVLA…AYLF, MGLT…AALL, and LPKL…LLLP. The disordered stretch occupies residues 522 to 548; that stretch reads ETIQDVERKSAPTSLQEEEMPMKQVQN.

The protein belongs to the major facilitator (TC 2.A.1) superfamily. Organic cation transporter (TC 2.A.1.19) family.

It is found in the basolateral cell membrane. The protein localises to the apical cell membrane. Its subcellular location is the cell membrane. The enzyme catalyses orotate(out) + L-glutamate(in) = orotate(in) + L-glutamate(out). The catalysed reaction is 3',5'-cyclic GMP(in) = 3',5'-cyclic GMP(out). It catalyses the reaction GMP(in) = GMP(out). It carries out the reaction 2'-deoxyguanosine(in) = 2'-deoxyguanosine(out). The enzyme catalyses GDP(in) = GDP(out). The catalysed reaction is guanosine(in) = guanosine(out). It catalyses the reaction GTP(in) = GTP(out). It carries out the reaction 3',5'-cyclic AMP(in) = 3',5'-cyclic AMP(out). The enzyme catalyses creatinine(in) = creatinine(out). The catalysed reaction is prostaglandin E2(out) = prostaglandin E2(in). It catalyses the reaction 2-oxoglutarate(in) = 2-oxoglutarate(out). It carries out the reaction glutarate(in) = glutarate(out). The enzyme catalyses urate(out) = urate(in). The catalysed reaction is estrone 3-sulfate(out) = estrone 3-sulfate(in). Its function is as follows. Functions as a Na(+)-independent bidirectional multispecific transporter. Contributes to the renal and hepatic elimination of endogenous organic compounds from the systemic circulation into the urine and bile, respectively. Capable of transporting a wide range of purine and pyrimidine nucleobases, nucleosides and nucleotides, with cGMP, 2'deoxyguanosine and GMP being the preferred substrates. Functions as a pH- and chloride-independent cGMP bidirectional facilitative transporter that can regulate both intracellular and extracellular levels of cGMP and may be involved in cGMP signaling pathways. Mediates orotate/glutamate bidirectional exchange and most likely display a physiological role in hepatic release of glutamate into the blood. Involved in renal secretion and possible reabsorption of creatinine. Able to uptake prostaglandin E2 (PGE2) and may contribute to PGE2 renal excretion. Also transports alpha-ketoglutarate and urate. Apart from the orotate/glutamate exchange, the counterions for the uptake of other SLC22A7/OAT2 substrates remain to be identified. This is Solute carrier family 22 member 7 (SLC22A7) from Pongo abelii (Sumatran orangutan).